Consider the following 269-residue polypeptide: Histone doublet H2B-H2A (269 aa).

Residues 1–168 are histone fold; it reads MATQKETTRK…LAGNAARDSK (168 aa). The tract at residues 210-249 is disordered; it reads RKKARKTTEKEASSPKKKAAPKKKKAASKQKKSLSDKELA. The span at 224–241 shows a compositional bias: basic residues; the sequence is PKKKAAPKKKKAASKQKK.

It is found in the host nucleus. It localises to the host cytoplasm. The protein resides in the virion. Its function is as follows. Histone-like protein that is recruited to viral factories during viral replication and participates in viral DNA packaging and virion production probably by forming unstable nucleosome-like particles. May compact the viral DNA. The sequence is that of Histone doublet H2B-H2A from Melbournevirus (MelV).